The following is a 346-amino-acid chain: UPF0718 protein YraQ (346 aa).

9 helical membrane-spanning segments follow: residues 12 to 32 (PIQWWKPALFFLVVIAGLWYV), 71 to 91 (MIYFLAVWKAAVLGVILGSLI), 113 to 133 (LLGTLFSLPGMMCTCCAAPVA), 146 to 166 (ALAFWMGNPVLNPATLVFMGF), 167 to 187 (VLGWGFAAIRLVAGLVMVLLI), 223 to 243 (ALWTLFWSTIPVYILAVLVLG), 260 to 280 (SLMWVVAMAVAGCLFVIPTAA), 296 to 316 (APALALLMTLPAVSLPSLIML), and 326 to 346 (WLTGAMVAVSGVIVGGLALLF).

The protein belongs to the UPF0718 family.

The protein localises to the cell membrane. In Escherichia coli (strain K12), this protein is UPF0718 protein YraQ (yraQ).